The sequence spans 131 residues: Phosphoribosyl-AMP cyclohydrolase (131 aa).

D89 lines the Mg(2+) pocket. C90 contacts Zn(2+). D91 and D93 together coordinate Mg(2+). Zn(2+)-binding residues include C106 and C113.

The protein belongs to the PRA-CH family. In terms of assembly, homodimer. Requires Mg(2+) as cofactor. Zn(2+) is required as a cofactor.

The protein localises to the cytoplasm. The enzyme catalyses 1-(5-phospho-beta-D-ribosyl)-5'-AMP + H2O = 1-(5-phospho-beta-D-ribosyl)-5-[(5-phospho-beta-D-ribosylamino)methylideneamino]imidazole-4-carboxamide. It participates in amino-acid biosynthesis; L-histidine biosynthesis; L-histidine from 5-phospho-alpha-D-ribose 1-diphosphate: step 3/9. Catalyzes the hydrolysis of the adenine ring of phosphoribosyl-AMP. This is Phosphoribosyl-AMP cyclohydrolase from Pyrobaculum aerophilum (strain ATCC 51768 / DSM 7523 / JCM 9630 / CIP 104966 / NBRC 100827 / IM2).